Reading from the N-terminus, the 564-residue chain is MFS-type transporter kojT (564 aa).

Asn113 carries an N-linked (GlcNAc...) asparagine glycan. Transmembrane regions (helical) follow at residues 120–140, 159–179, 187–207, 217–237, 249–269, 278–298, 353–373, 389–409, 437–457, 462–482, 500–520, and 530–550; these read WATL…SSID, SLAT…AAPF, PVYI…GLAP, FLAG…MADI, VCCT…AFIG, WTEW…FLFV, IMVA…FGFL, GSVG…FAMV, LWFA…MGWT, ISYW…QGIF, ALVS…IVSI, and WSLT…YIFY.

Belongs to the major facilitator superfamily.

The protein resides in the cell membrane. Its function is as follows. MFS-type transporter; part of the gene cluster that mediates the biosynthesis of 5-hydroxy-2-hydroxymethyl-1,4-pyrone, also know as kojic acid, a by-product in the fermentation process of malting rice that acts as a chelation agent. Involved in the seretion of kojic acid. The sequence is that of MFS-type transporter kojT from Aspergillus flavus (strain ATCC 200026 / FGSC A1120 / IAM 13836 / NRRL 3357 / JCM 12722 / SRRC 167).